A 188-amino-acid chain; its full sequence is Elongation factor P (188 aa).

It belongs to the elongation factor P family.

It localises to the cytoplasm. Its pathway is protein biosynthesis; polypeptide chain elongation. Involved in peptide bond synthesis. Stimulates efficient translation and peptide-bond synthesis on native or reconstituted 70S ribosomes in vitro. Probably functions indirectly by altering the affinity of the ribosome for aminoacyl-tRNA, thus increasing their reactivity as acceptors for peptidyl transferase. The protein is Elongation factor P of Chlorobaculum parvum (strain DSM 263 / NCIMB 8327) (Chlorobium vibrioforme subsp. thiosulfatophilum).